Reading from the N-terminus, the 135-residue chain is MQSSSPSTSHCSQIPIKIQHHIAKKRQVRRRRVDLDCGCSYYIHLDCINHGFTHRGVHHCASSNEWRLYLRDNKSPIFHDNQTQSEPIQQQIQHTNIPNQIQPQLEEGTGDSQMFSQLPHLDDLTVSDWSFFKSL.

Residues 17–32 (KIQHHIAKKRQVRRRR) carry the Nuclear localization signal motif. A zinc finger lies at 37–54 (CGCSYYIHLDCINHGFTH). The segment at 120-135 (HLDDLTVSDWSFFKSL) is transactivation.

It belongs to the geminiviridae transcriptional activator protein family. In terms of assembly, monomer. Homodimer. Homooligomer. Self-interaction correlates with nuclear localization and efficient activation of transcription. Monomers suppress local silencing by interacting with and inactivating host adenosine kinase 2 (ADK2) in the cytoplasm. Interacts with and inhibits host SNF1 kinase. Binds to ssDNA. May interact with host RPS27A. Phosphorylated.

It localises to the host nucleus. It is found in the host cytoplasm. Multifunctional protein that modulates host antiviral defenses and promotes host attractiveness to insect vectors. Acts as a suppressor of RNA-mediated gene silencing, also known as post-transcriptional gene silencing (PTGS), a mechanism of plant viral defense that limits the accumulation of viral RNAs. TrAP suppresses the host RNA silencing by inhibiting adenosine kinase 2 (ADK2), a kinase involved in a general methylation pathway. Also suppresses the host basal defense by interacting with and inhibiting SNF1 kinase, a key regulator of cell metabolism implicated in innate antiviral defense. Its function is as follows. Inhibits signal transduction by the phytohormone jasmonate, making the infected plant more attractive to aphids, which are the second host to play a role as a dissemination vector. Acts by binding to ubiquitin precursor RPS27A, thereby preventing ubiquitin degradation of JAZ. This Capsicum annuum (Capsicum pepper) protein is Transcriptional activator protein.